Consider the following 403-residue polypeptide: uncharacterized protein (403 aa).

2 helical membrane passes run 29–49 (FVIF…CGFL) and 55–75 (AFIA…FFGC).

This sequence belongs to the chlamydial CPn_0129/CT_036/TC_0306 family.

The protein localises to the cell membrane. This is an uncharacterized protein from Chlamydia trachomatis serovar D (strain ATCC VR-885 / DSM 19411 / UW-3/Cx).